Reading from the N-terminus, the 122-residue chain is Large ribosomal subunit protein uL14 (122 aa).

Belongs to the universal ribosomal protein uL14 family. As to quaternary structure, part of the 50S ribosomal subunit. Forms a cluster with proteins L3 and L19. In the 70S ribosome, L14 and L19 interact and together make contacts with the 16S rRNA in bridges B5 and B8.

In terms of biological role, binds to 23S rRNA. Forms part of two intersubunit bridges in the 70S ribosome. The protein is Large ribosomal subunit protein uL14 of Nitrosococcus oceani (strain ATCC 19707 / BCRC 17464 / JCM 30415 / NCIMB 11848 / C-107).